The sequence spans 176 residues: NAD(P)H-quinone oxidoreductase subunit 6, chloroplastic (176 aa).

5 helical membrane-spanning segments follow: residues 10–30 (ILLV…VLFT), 32–52 (PIYS…FYIP), 61–81 (AQLL…VMFM), 90–112 (FHLW…FSLI), and 152–172 (FYLP…GAIA).

The protein belongs to the complex I subunit 6 family. NDH is composed of at least 16 different subunits, 5 of which are encoded in the nucleus.

Its subcellular location is the plastid. The protein localises to the chloroplast thylakoid membrane. It catalyses the reaction a plastoquinone + NADH + (n+1) H(+)(in) = a plastoquinol + NAD(+) + n H(+)(out). It carries out the reaction a plastoquinone + NADPH + (n+1) H(+)(in) = a plastoquinol + NADP(+) + n H(+)(out). NDH shuttles electrons from NAD(P)H:plastoquinone, via FMN and iron-sulfur (Fe-S) centers, to quinones in the photosynthetic chain and possibly in a chloroplast respiratory chain. The immediate electron acceptor for the enzyme in this species is believed to be plastoquinone. Couples the redox reaction to proton translocation, and thus conserves the redox energy in a proton gradient. The protein is NAD(P)H-quinone oxidoreductase subunit 6, chloroplastic (ndhG) of Ceratophyllum demersum (Rigid hornwort).